The chain runs to 323 residues: tRNA U34 carboxymethyltransferase (323 aa).

Residues Lys91, Trp105, Lys110, Gly130, 152 to 154 (DPS), 181 to 182 (IE), Met196, Tyr200, and Arg315 contribute to the carboxy-S-adenosyl-L-methionine site.

Belongs to the class I-like SAM-binding methyltransferase superfamily. CmoB family. Homotetramer.

It carries out the reaction carboxy-S-adenosyl-L-methionine + 5-hydroxyuridine(34) in tRNA = 5-carboxymethoxyuridine(34) in tRNA + S-adenosyl-L-homocysteine + H(+). In terms of biological role, catalyzes carboxymethyl transfer from carboxy-S-adenosyl-L-methionine (Cx-SAM) to 5-hydroxyuridine (ho5U) to form 5-carboxymethoxyuridine (cmo5U) at position 34 in tRNAs. The sequence is that of tRNA U34 carboxymethyltransferase from Vibrio vulnificus (strain CMCP6).